Here is a 293-residue protein sequence, read N- to C-terminus: Cytidine deaminase 6 (293 aa).

CMP/dCMP-type deaminase domains are found at residues 16–147 (RGPS…FGPD) and 178–293 (EDCS…TNKN). Substrate is bound at residue 57 to 59 (NVE). His-70 contributes to the Zn(2+) binding site. Glu-72 functions as the Proton donor in the catalytic mechanism. Cys-103 and Cys-106 together coordinate Zn(2+).

This sequence belongs to the cytidine and deoxycytidylate deaminase family. Homodimer. Zn(2+) is required as a cofactor.

It catalyses the reaction cytidine + H2O + H(+) = uridine + NH4(+). The enzyme catalyses 2'-deoxycytidine + H2O + H(+) = 2'-deoxyuridine + NH4(+). Its function is as follows. This enzyme scavenges exogenous and endogenous cytidine and 2'-deoxycytidine for UMP synthesis. This Arabidopsis thaliana (Mouse-ear cress) protein is Cytidine deaminase 6 (CDA6).